Reading from the N-terminus, the 246-residue chain is MAPSLASGPADRIIVALDGMAPEQALRFAAQLDGLRWVKVGLELFVQAGPEVVAQLREQGLRVFLDLKFHDIPATMAGACRRAAALGAELITVHACAGSEALKAAQAAAVEGAQQAGLNPPTLLAVTVLTSWEEQRLQRELAIQQSIGERVPALAQLSATAGIGGCVCSPLEAAALRAQHPEPFALVTPGIRPKGSAVGDQARVMGPAEAIAAGASQLVIGRPITKADDPSAAFAACCTQLLGSID.

Substrate contacts are provided by residues aspartate 18, lysine 39, 66–75 (DLKFHDIPAT), threonine 130, arginine 192, glutamine 201, glycine 221, and arginine 222. The Proton donor role is filled by lysine 68.

Belongs to the OMP decarboxylase family. Type 1 subfamily. In terms of assembly, homodimer.

It carries out the reaction orotidine 5'-phosphate + H(+) = UMP + CO2. It functions in the pathway pyrimidine metabolism; UMP biosynthesis via de novo pathway; UMP from orotate: step 2/2. Catalyzes the decarboxylation of orotidine 5'-monophosphate (OMP) to uridine 5'-monophosphate (UMP). The sequence is that of Orotidine 5'-phosphate decarboxylase from Parasynechococcus marenigrum (strain WH8102).